Reading from the N-terminus, the 107-residue chain is Guanylin (107 aa).

The N-terminal stretch at 1–20 is a signal peptide; sequence MNTFLLSALCLGAWAALVGA. Positions 21 to 92 are excised as a propeptide; that stretch reads VTVQDGDFSF…LNRLAVIAQD (72 aa). Disulfide bonds link cysteine 61-cysteine 74, cysteine 96-cysteine 104, and cysteine 99-cysteine 107.

Belongs to the guanylin family.

It localises to the secreted. Functionally, endogenous activator of intestinal guanylate cyclase. It stimulates this enzyme through the same receptor binding region as the heat-stable enterotoxins. This Cavia porcellus (Guinea pig) protein is Guanylin (GUCA2A).